The chain runs to 397 residues: F-box protein At5g25290 (397 aa).

Positions 11 to 56 (VTLWSEIPMDILRSVFERLSFVDLHRAKIVCSHWYSCSKQSFLRKT) constitute an F-box domain.

This is F-box protein At5g25290 from Arabidopsis thaliana (Mouse-ear cress).